The primary structure comprises 207 residues: Peptidyl-tRNA hydrolase (207 aa).

Y17 provides a ligand contact to tRNA. The Proton acceptor role is filled by H22. Positions 68, 70, and 116 each coordinate tRNA.

The protein belongs to the PTH family. In terms of assembly, monomer.

It is found in the cytoplasm. It carries out the reaction an N-acyl-L-alpha-aminoacyl-tRNA + H2O = an N-acyl-L-amino acid + a tRNA + H(+). Its function is as follows. Hydrolyzes ribosome-free peptidyl-tRNAs (with 1 or more amino acids incorporated), which drop off the ribosome during protein synthesis, or as a result of ribosome stalling. In terms of biological role, catalyzes the release of premature peptidyl moieties from peptidyl-tRNA molecules trapped in stalled 50S ribosomal subunits, and thus maintains levels of free tRNAs and 50S ribosomes. The polypeptide is Peptidyl-tRNA hydrolase (Buchnera aphidicola subsp. Baizongia pistaciae (strain Bp)).